We begin with the raw amino-acid sequence, 711 residues long: Taperin (711 aa).

3 disordered regions span residues serine 134 to proline 305, arginine 328 to serine 384, and glutamine 414 to valine 438. Pro residues predominate over residues proline 157–proline 180. Residues leucine 197–threonine 206 show a composition bias toward polar residues. A Phosphoserine modification is found at serine 241. A compositionally biased stretch (low complexity) spans threonine 267–serine 282. The span at glutamine 283–serine 296 shows a compositional bias: polar residues. 3 positions are modified to phosphoserine: serine 362, serine 418, and serine 463. Disordered stretches follow at residues threonine 500–serine 535, serine 572–phenylalanine 630, serine 642–proline 662, and glutamine 674–phenylalanine 711. 2 stretches are compositionally biased toward polar residues: residues leucine 512 to asparagine 521 and asparagine 581 to glutamate 590. The segment covering leucine 597 to glycine 624 has biased composition (acidic residues).

This sequence belongs to the taperin family. Interacts with GRXCR2; the interaction restricts TPRN to the stereocilum basal region. Interacts with actin ACTB; the interaction may stabilize stereocilia. Interacts with CLIC5. Interacts with PTPRQ. TPRN, CLIC5 and PTPQR form concentric rings at the base of stereocilia and may form a complex. Interacts with phosphatase PPP1CA; the interaction results in inhibition of PPC1A phosphatase activity. Interacts with DNA damage response proteins XRCC6/KU70, XRCC5/KU80, PARP1, TOP1 and TOP2A; these interactions recruit TPRN to sites of DNA damage where it may play a role in DNA repair. Expression is detected in fetal cochlea.

The protein resides in the cell projection. It localises to the stereocilium. Its subcellular location is the microvillus. It is found in the nucleus. The protein localises to the nucleoplasm. The protein resides in the cytoplasm. Functionally, essential for hearing. Required for maintenance of stereocilia on both inner and outer hair cells. Necessary for the integrity of the stereociliary rootlet. May act as an actin cytoskeleton regulator involved in the regulation of actin dynamics at the pointed end in hair cells. Forms rings at the base of stereocilia and binds actin filaments in the stereocilia which may stabilize the stereocilia. Acts as a strong inhibitor of PPP1CA phosphatase activity. Recruited to sites of DNA damage and may play a role in DNA damage repair. This chain is Taperin (TPRN), found in Homo sapiens (Human).